Here is a 957-residue protein sequence, read N- to C-terminus: Melanoma-associated antigen E1 (957 aa).

The tract at residues 1–455 (MSLVSQNSRR…DSEGPKGAEG (455 aa)) is disordered. Polar residues-rich tracts occupy residues 85–96 (SEASSASGQPTI) and 104–130 (VLPT…SVTL). Residues 138–162 (TSRPPTSSEEPSTSVPPTASEVPST) are compositionally biased toward low complexity. Polar residues-rich tracts occupy residues 219–244 (GLST…TEGL), 268–320 (PSTS…STSV), 329–344 (STSV…STSV), 364–380 (LSTS…DTSV), and 414–428 (TLFS…NPSK). MAGE domains lie at 491 to 690 (MEQN…YNEA) and 745 to 936 (LESK…YREA). The tract at residues 743 to 957 (SRLESKARKL…HRQIFVHNFR (215 aa)) is interaction with DTNA.

In terms of assembly, interacts with DTNA. Interacts with TRIM28.

It is found in the cytoplasm. It localises to the perinuclear region. Its subcellular location is the nucleus. The protein resides in the cell membrane. In terms of biological role, may enhance ubiquitin ligase activity of RING-type zinc finger-containing E3 ubiquitin-protein ligases. Proposed to act through recruitment and/or stabilization of the Ubl-conjugating enzyme (E2) at the E3:substrate complex. The chain is Melanoma-associated antigen E1 (MAGEE1) from Homo sapiens (Human).